The following is a 147-amino-acid chain: Hemoglobin subunit beta (147 aa).

The Globin domain maps to 2 to 147 (EWTDAERSAI…VVSALCRQYH (146 aa)). Positions 63 and 92 each coordinate heme b.

This sequence belongs to the globin family. In terms of assembly, heterotetramer of two alpha chains and two beta chains. Red blood cells.

Involved in oxygen transport from gills to the various peripheral tissues. The sequence is that of Hemoglobin subunit beta (hbb) from Carassius auratus (Goldfish).